Consider the following 261-residue polypeptide: N-acetyltransferase ECO1 (261 aa).

The segment at 29–53 (LKCPKCEMKYSPNSIDDVATHKKYH) adopts a CCHH-type zinc-finger fold. The N-acetyltransferase domain maps to 102–261 (VMIQENKPAE…SGHILIPCYL (160 aa)).

This sequence belongs to the acetyltransferase family. ECO subfamily.

The protein resides in the nucleus. Functionally, probable acetyltransferase required for the establishment of sister chromatid cohesion and couple the processes of cohesion and DNA replication to ensure that only sister chromatids become paired together. In contrast to the structural cohesins, the deposition and establishment factors are required only during S phase. Acts by acetylating the cohesin complex component SMC3. This is N-acetyltransferase ECO1 (ECO1) from Candida glabrata (strain ATCC 2001 / BCRC 20586 / JCM 3761 / NBRC 0622 / NRRL Y-65 / CBS 138) (Yeast).